The primary structure comprises 119 residues: uncharacterized protein (119 aa).

This is an uncharacterized protein from Dactylococcopsis salina (Myxobaktron salinum).